The sequence spans 119 residues: Holo-[acyl-carrier-protein] synthase (119 aa).

Mg(2+)-binding residues include Asp8 and Glu58.

This sequence belongs to the P-Pant transferase superfamily. AcpS family. The cofactor is Mg(2+).

It localises to the cytoplasm. It catalyses the reaction apo-[ACP] + CoA = holo-[ACP] + adenosine 3',5'-bisphosphate + H(+). In terms of biological role, transfers the 4'-phosphopantetheine moiety from coenzyme A to a Ser of acyl-carrier-protein. The protein is Holo-[acyl-carrier-protein] synthase of Streptococcus suis (strain 05ZYH33).